Here is a 554-residue protein sequence, read N- to C-terminus: uncharacterized protein (554 aa).

A run of 5 helical transmembrane segments spans residues 13-31 (SVAHIVFLYAFVVAAGVYL), 36-58 (IFGVSLGVTFVLFAGILMGHFGF), 73-92 (LILFVFCIGLQVGPSFFSSF), 99-121 (LNLLAVGIVVLNIAVALGLYYLW), and 161-183 (IALGYACAYPLGVVGIIGSIIAI). RCK C-terminal domains follow at residues 199–281 (KTQS…FIGK) and 282–366 (EVEL…VLGN). Helical transmembrane passes span 376-395 (IVTIFVGIFLGILLGSLPIA), 405-422 (LGLAGGPLVVAILIGRFG), 442-464 (IGIVLFLASVGIDAGANFVQTVV), and 468-490 (GLLYVGCGFLITVIPLLIIGAIA).

The protein belongs to the AAE transporter (TC 2.A.81) family.

Its subcellular location is the cell membrane. This is an uncharacterized protein from Bacteroides thetaiotaomicron (strain ATCC 29148 / DSM 2079 / JCM 5827 / CCUG 10774 / NCTC 10582 / VPI-5482 / E50).